The sequence spans 122 residues: Large ribosomal subunit protein uL14 (122 aa).

The protein belongs to the universal ribosomal protein uL14 family. Part of the 50S ribosomal subunit. Forms a cluster with proteins L3 and L19. In the 70S ribosome, L14 and L19 interact and together make contacts with the 16S rRNA in bridges B5 and B8.

Its function is as follows. Binds to 23S rRNA. Forms part of two intersubunit bridges in the 70S ribosome. The sequence is that of Large ribosomal subunit protein uL14 from Bifidobacterium longum (strain DJO10A).